Here is a 72-residue protein sequence, read N- to C-terminus: Exodeoxyribonuclease 7 small subunit (72 aa).

Belongs to the XseB family. In terms of assembly, heterooligomer composed of large and small subunits.

It localises to the cytoplasm. The enzyme catalyses Exonucleolytic cleavage in either 5'- to 3'- or 3'- to 5'-direction to yield nucleoside 5'-phosphates.. In terms of biological role, bidirectionally degrades single-stranded DNA into large acid-insoluble oligonucleotides, which are then degraded further into small acid-soluble oligonucleotides. The protein is Exodeoxyribonuclease 7 small subunit of Chlamydia trachomatis serovar A (strain ATCC VR-571B / DSM 19440 / HAR-13).